The sequence spans 386 residues: Ribonuclease D (386 aa).

Residues 3-174 form the 3'-5' exonuclease domain; sequence HTITTTDELA…EIYEYLSAEL (172 aa). An HRDC domain is found at 213–294; that stretch reads SGRVVAIAQQ…ARGMSVPNSE (82 aa).

The protein belongs to the RNase D family. A divalent metal cation is required as a cofactor.

It localises to the cytoplasm. The catalysed reaction is Exonucleolytic cleavage that removes extra residues from the 3'-terminus of tRNA to produce 5'-mononucleotides.. Functionally, exonuclease involved in the 3' processing of various precursor tRNAs. Initiates hydrolysis at the 3'-terminus of an RNA molecule and releases 5'-mononucleotides. This chain is Ribonuclease D, found in Jannaschia sp. (strain CCS1).